A 167-amino-acid chain; its full sequence is Ribosome maturation factor RimM (167 aa).

The PRC barrel domain occupies 94 to 166 (QNRAWLHELE…YIVVPRFDEF (73 aa)).

This sequence belongs to the RimM family. As to quaternary structure, binds ribosomal protein uS19.

It localises to the cytoplasm. In terms of biological role, an accessory protein needed during the final step in the assembly of 30S ribosomal subunit, possibly for assembly of the head region. Essential for efficient processing of 16S rRNA. May be needed both before and after RbfA during the maturation of 16S rRNA. It has affinity for free ribosomal 30S subunits but not for 70S ribosomes. The polypeptide is Ribosome maturation factor RimM (Chlorobium phaeovibrioides (strain DSM 265 / 1930) (Prosthecochloris vibrioformis (strain DSM 265))).